Here is a 323-residue protein sequence, read N- to C-terminus: MRKSMGITVFGCEQDEANAFRTLSPDFHIIPTLISDAISADNAKLAAGNQCISVGHKSEVSEATILALRKVGVKYISTRSIGCNHIDTTAAERMGISVGTVAYSPDSVADYALMLMLMAIRGAKSTIHAVAQQNFRLDCVRGKELRDMTVGVIGTGHIGQAVVKRLRGFGCRVLAYDNSRKIEADYVQLDELLKNSDIVTLHVPLCADTRHLIGQRQIGEMKQGAFLINTGRGALVDTGSLVEALGSGKLGGAALDVLEGEDQFVYTDCSQKVLDHPFLSQLLRMPNVIITPHTAYYTERVLRDTTEKTIRNCLNFERSLQHE.

NAD(+) is bound by residues 157–158 (HI), 230–232 (TGR), and Asp256. Arg232 is an active-site residue. Glu261 is a catalytic residue. The active-site Proton donor is the His293. 293–296 (HTAY) provides a ligand contact to NAD(+).

This sequence belongs to the D-isomer specific 2-hydroxyacid dehydrogenase family.

In terms of biological role, required for high-level resistance to glycopeptides antibiotics. Catalyzes the reduction of 2-keto acids to 2-D-hydroxy acids that give rise to peptidoglycan precursors that terminate in the depsipeptide D-alanine-2-lactate rather than the dipeptide D-alanine-D-alanine thus preventing vancomycin binding. This is D-specific alpha-keto acid dehydrogenase (vanHB) from Enterococcus faecalis (strain ATCC 700802 / V583).